The sequence spans 520 residues: Amine oxidase [flavin-containing] B (520 aa).

Residue S2 is modified to N-acetylserine. Residues 2–489 (SSKCDVVVVG…TFLQRHLPSV (488 aa)) lie on the Cytoplasmic side of the membrane. An N6-acetyllysine modification is found at K52. Position 397 is an S-8alpha-FAD cysteine (C397). Residues 490-516 (PGLLKLIGLTTIFSATALGFLAHKRGL) traverse the membrane as a helical; Anchor for type IV membrane protein segment. Topologically, residues 517 to 520 (LVRI) are mitochondrial intermembrane.

Monomer, homo- or heterodimer (containing two subunits of similar size). Each subunit contains a covalently bound flavin. Enzymatically active as monomer. Requires FAD as cofactor.

The protein resides in the mitochondrion outer membrane. It catalyses the reaction a secondary aliphatic amine + O2 + H2O = a primary amine + an aldehyde + H2O2. The catalysed reaction is a primary methyl amine + O2 + H2O = an aldehyde + H2O2 + NH4(+). The enzyme catalyses benzylamine + O2 + H2O = benzaldehyde + H2O2 + NH4(+). It carries out the reaction (R)-adrenaline + O2 + H2O = (R)-3,4-dihydroxymandelaldehyde + methylamine + H2O2. It catalyses the reaction dopamine + O2 + H2O = 3,4-dihydroxyphenylacetaldehyde + H2O2 + NH4(+). The catalysed reaction is tyramine + O2 + H2O = (4-hydroxyphenyl)acetaldehyde + H2O2 + NH4(+). The enzyme catalyses (R)-noradrenaline + O2 + H2O = (R)-3,4-dihydroxymandelaldehyde + H2O2 + NH4(+). It carries out the reaction 2-phenylethylamine + O2 + H2O = 2-phenylacetaldehyde + H2O2 + NH4(+). It catalyses the reaction N-acetylputrescine + O2 + H2O = 4-acetamidobutanal + H2O2 + NH4(+). Its function is as follows. Catalyzes the oxidative deamination of primary and some secondary amines such as neurotransmitters, and exogenous amines including the tertiary amine, neurotoxin 1-methyl-4-phenyl-1,2,3,6-tetrahydropyridine (MPTP), with concomitant reduction of oxygen to hydrogen peroxide and participates in the metabolism of neuroactive and vasoactive amines in the central nervous system and peripheral tissues. Preferentially degrades benzylamine and phenylethylamine. The protein is Amine oxidase [flavin-containing] B of Bos taurus (Bovine).